The chain runs to 590 residues: Cytosolic Fe-S cluster assembly factor nar1 (590 aa).

Cys-20 provides a ligand contact to [4Fe-4S] cluster. The tract at residues 25–50 is disordered; sequence ESLPQKQSNENPYEVTTEDKVQPENP. Residues Cys-60, Cys-63, Cys-66, Cys-204, and Cys-259 each contribute to the [4Fe-4S] cluster site. The interval 423 to 446 is disordered; it reads PGAKVATGQTAGGRRQPISRNGAS. [4Fe-4S] cluster-binding residues include Cys-461 and Cys-465.

This sequence belongs to the NARF family.

Functionally, component of the cytosolic Fe/S protein assembly machinery. Required for maturation of extramitochondrial Fe/S proteins. May play a role in the transfer of pre-assembled Fe/S clusters to target apoproteins. The chain is Cytosolic Fe-S cluster assembly factor nar1 (nar1) from Emericella nidulans (strain FGSC A4 / ATCC 38163 / CBS 112.46 / NRRL 194 / M139) (Aspergillus nidulans).